The primary structure comprises 168 residues: Probable prefoldin subunit 5 (168 aa).

The protein belongs to the prefoldin subunit alpha family. In terms of assembly, heterohexamer of two PFD-alpha type and four PFD-beta type subunits.

Its function is as follows. Binds specifically to cytosolic chaperonin (c-CPN) and transfers target proteins to it. Binds to nascent polypeptide chain and promotes folding in an environment in which there are many competing pathways for nonnative proteins. This chain is Probable prefoldin subunit 5, found in Drosophila melanogaster (Fruit fly).